Reading from the N-terminus, the 201-residue chain is UPF0301 protein Mvan_6057 (201 aa).

It belongs to the UPF0301 (AlgH) family.

This chain is UPF0301 protein Mvan_6057, found in Mycolicibacterium vanbaalenii (strain DSM 7251 / JCM 13017 / BCRC 16820 / KCTC 9966 / NRRL B-24157 / PYR-1) (Mycobacterium vanbaalenii).